An 88-amino-acid polypeptide reads, in one-letter code: MEQNSYVIIDETGIHARPATMLVQTASKFDSDIQLEYNGKKVNLKSIMGVMSLGVGKDAEITIYADGSDESDAIQAISDVLSKEGLTK.

Residues Met1–Lys88 form the HPr domain. His15 functions as the Pros-phosphohistidine intermediate in the catalytic mechanism. Position 46 is a phosphoserine; by HPrK/P (Ser46).

Its subcellular location is the cytoplasm. With respect to regulation, phosphorylation on Ser-46 inhibits the phosphoryl transfer from enzyme I to HPr. Functionally, general (non sugar-specific) component of the phosphoenolpyruvate-dependent sugar phosphotransferase system (sugar PTS). This major carbohydrate active-transport system catalyzes the phosphorylation of incoming sugar substrates concomitantly with their translocation across the cell membrane. The phosphoryl group from phosphoenolpyruvate (PEP) is transferred to the phosphoryl carrier protein HPr by enzyme I. Phospho-HPr then transfers it to the PTS EIIA domain. In terms of biological role, P-Ser-HPr interacts with the catabolite control protein A (CcpA), forming a complex that binds to DNA at the catabolite response elements cre, operator sites preceding a large number of catabolite-regulated genes. Thus, P-Ser-HPr is a corepressor in carbon catabolite repression (CCR), a mechanism that allows bacteria to coordinate and optimize the utilization of available carbon sources. P-Ser-HPr also plays a role in inducer exclusion, in which it probably interacts with several non-PTS permeases and inhibits their transport activity. In Staphylococcus aureus (strain MSSA476), this protein is Phosphocarrier protein HPr (ptsH).